A 236-amino-acid polypeptide reads, in one-letter code: 7-cyano-7-deazaguanine synthase (236 aa).

7 to 17 lines the ATP pocket; that stretch reads CSGGLDSVSLA. Residues C185, C193, C196, and C199 each coordinate Zn(2+).

Belongs to the QueC family. The cofactor is Zn(2+).

It catalyses the reaction 7-carboxy-7-deazaguanine + NH4(+) + ATP = 7-cyano-7-deazaguanine + ADP + phosphate + H2O + H(+). It functions in the pathway purine metabolism; 7-cyano-7-deazaguanine biosynthesis. Its function is as follows. Catalyzes the ATP-dependent conversion of 7-carboxy-7-deazaguanine (CDG) to 7-cyano-7-deazaguanine (preQ(0)). The chain is 7-cyano-7-deazaguanine synthase from Sinorhizobium fredii (strain NBRC 101917 / NGR234).